Here is a 378-residue protein sequence, read N- to C-terminus: Ribosomal RNA large subunit methyltransferase G (378 aa).

This sequence belongs to the methyltransferase superfamily. RlmG family.

Its subcellular location is the cytoplasm. It carries out the reaction guanosine(1835) in 23S rRNA + S-adenosyl-L-methionine = N(2)-methylguanosine(1835) in 23S rRNA + S-adenosyl-L-homocysteine + H(+). Specifically methylates the guanine in position 1835 (m2G1835) of 23S rRNA. The sequence is that of Ribosomal RNA large subunit methyltransferase G from Enterobacter sp. (strain 638).